The following is a 335-amino-acid chain: Oligopeptide transport ATP-binding protein OppD (335 aa).

Residues 18–267 enclose the ABC transporter domain; that stretch reads LEVNDLRVTF…PVHPYSIGLL (250 aa). 54–61 is a binding site for ATP; the sequence is GESGSGKS.

The protein belongs to the ABC transporter superfamily. In terms of assembly, the complex is composed of two ATP-binding proteins (OppD and OppF), two transmembrane proteins (OppB and OppC) and a solute-binding protein (OppA).

The protein localises to the cell inner membrane. The enzyme catalyses a [peptide](out) + ATP + H2O = a [peptide](in) + ADP + phosphate + H(+). The catalysed reaction is L-alanyl-gamma-D-glutamyl-meso-2,6-diaminopimelate(out) + ATP + H2O = L-alanyl-gamma-D-glutamyl-meso-2,6-diaminopimelate(in) + ADP + phosphate + H(+). Functionally, part of the ABC transporter complex OppABCDF involved in the uptake of oligopeptides, including the cell wall murein tripeptide L-alanyl-gamma-D-glutamyl-meso-diaminopimelate. Responsible for energy coupling to the transport system. Plays an important nutritional role and is involved in the recycling of cell wall peptides. Binds ATP. This chain is Oligopeptide transport ATP-binding protein OppD, found in Salmonella typhimurium (strain LT2 / SGSC1412 / ATCC 700720).